A 180-amino-acid chain; its full sequence is MEYKTPFIAKKLGVSPKAVVRIAQQLNLTIEKNKYGHFIFTQDDLDQMLEYHRSQIEQSQNTHPTQKTSSNDVEELKTQVNTIVQNISSHDFEQLAAQLNTITRRLDRMEEQMQDKANDVVTYQLLQHRREMEEMLERIQKLEAGLKKEEPIYITPDTKPTYEREKKPKRRKMIFSIFGL.

Positions T5 to Q25 form a DNA-binding region, H-T-H motif. A coiled-coil region spans residues H90–E150.

The protein belongs to the RacA family.

The protein localises to the cytoplasm. Required for the formation of axial filaments and for anchoring the origin regions at the cell poles in sporulating cells, thus ensuring proper chromosome segregation in the prespore. Binds in a dispersed manner throughout the chromosome but preferentially to sites clustered in the origin portion of the chromosome, causing condensation of the chromosome and its remodeling into an elongated, anchored structure. In Bacillus anthracis (strain A0248), this protein is Chromosome-anchoring protein RacA.